Reading from the N-terminus, the 139-residue chain is Putative nickel-responsive regulator (139 aa).

Ni(2+) contacts are provided by His79, His90, His92, and Cys98.

It belongs to the transcriptional regulatory CopG/NikR family. Ni(2+) serves as cofactor.

Functionally, transcriptional regulator. This chain is Putative nickel-responsive regulator, found in Solibacter usitatus (strain Ellin6076).